We begin with the raw amino-acid sequence, 287 residues long: Pantothenate synthetase (287 aa).

Met-30–His-37 lines the ATP pocket. His-37 (proton donor) is an active-site residue. Gln-61 provides a ligand contact to (R)-pantoate. Gln-61 provides a ligand contact to beta-alanine. An ATP-binding site is contributed by Gly-149–Asp-152. (R)-pantoate is bound at residue Gln-155. Residues Val-178 and Leu-186–Arg-189 contribute to the ATP site.

The protein belongs to the pantothenate synthetase family. Homodimer.

Its subcellular location is the cytoplasm. It catalyses the reaction (R)-pantoate + beta-alanine + ATP = (R)-pantothenate + AMP + diphosphate + H(+). It functions in the pathway cofactor biosynthesis; (R)-pantothenate biosynthesis; (R)-pantothenate from (R)-pantoate and beta-alanine: step 1/1. Its function is as follows. Catalyzes the condensation of pantoate with beta-alanine in an ATP-dependent reaction via a pantoyl-adenylate intermediate. In Pseudomonas putida (strain GB-1), this protein is Pantothenate synthetase.